The chain runs to 128 residues: Anion exchange transporter (128 aa).

At Leu-1–Lys-14 the chain is on the extracellular side. Residues Ile-15–Cys-35 form a helical membrane-spanning segment. At Thr-36 to Ser-66 the chain is on the cytoplasmic side. A helical membrane pass occupies residues Ala-67 to Ala-87. The Extracellular segment spans residues Gln-88–Glu-103. A helical membrane pass occupies residues Phe-104–Ala-124. The Cytoplasmic segment spans residues Ala-125–Arg-128.

The protein belongs to the SLC26A/SulP transporter (TC 2.A.53) family. As to expression, expressed in gastric epithelium, predominantly in the gastric parietal cells but also at lower levels in mucosal cells.

The protein resides in the basolateral cell membrane. It localises to the recycling endosome membrane. The protein localises to the apical cell membrane. It is found in the lateral cell membrane. The catalysed reaction is chloride(in) = chloride(out). The enzyme catalyses iodide(out) = iodide(in). It catalyses the reaction bromide(in) = bromide(out). It carries out the reaction oxalate(in) = oxalate(out). The catalysed reaction is nitrate(in) = nitrate(out). The enzyme catalyses sulfate(in) = sulfate(out). It catalyses the reaction D-gluconate(in) = D-gluconate(out). It carries out the reaction thiocyanate(in) = thiocyanate(out). The catalysed reaction is hydrogencarbonate(in) = hydrogencarbonate(out). The enzyme catalyses hydrogencarbonate(in) + chloride(out) = hydrogencarbonate(out) + chloride(in). In terms of biological role, acts as an anion channel mediating the transport of chloride, bromide, iodide, nitrate, sulfate, gluconate, thiocyanate, oxalate and bicarbonate ions. Its permeability towards bicarbonate is weak and increases when pH is above 7. Mediates thiocyanate transport in retinal pigment epithelium cells. Mediates iodide transport in the thyroid gland, playing an important role in the synthesis of thyroid hormones and the maintenance of thyroid function. This Oryctolagus cuniculus (Rabbit) protein is Anion exchange transporter.